The sequence spans 226 residues: Clarin-3 (226 aa).

Residues 8–28 (LMFLSSFFTSLGSFIVICSIL) form a helical membrane-spanning segment. N-linked (GlcNAc...) asparagine glycosylation occurs at N83. The next 3 helical transmembrane spans lie at 92–112 (VTIL…GFTF), 129–149 (VYTW…LFVA), and 181–201 (FWLI…IIFY).

The protein belongs to the clarin family.

Its subcellular location is the membrane. This Homo sapiens (Human) protein is Clarin-3 (CLRN3).